The sequence spans 223 residues: Adenylate kinase 4, mitochondrial (223 aa).

An a ribonucleoside 5'-triphosphate-binding site is contributed by 15 to 20; that stretch reads GSGKGT. Positions 35 to 64 are NMP; the sequence is SSGHLLRENLKTGTEVGDVAKQYLEKGLLV. Ser-36 and Arg-41 together coordinate AMP. Lys-60 is subject to N6-succinyllysine. Residues 62–64, 89–92, and Gln-96 each bind AMP; these read LLV and GFPR. Residues 125–162 are LID; it reads RRWIHPSSGRVYNLDFNPPQVQGIDDITGEPLVQQEDD. A ribonucleoside 5'-triphosphate is bound by residues Arg-126 and 135 to 136; that span reads VY. AMP is bound at residue Arg-170. Lys-175 bears the N6-acetyllysine mark. N6-acetyllysine; alternate is present on residues Lys-179 and Lys-186. Residues Lys-179 and Lys-186 each carry the N6-succinyllysine; alternate modification. Position 199 (Thr-199) interacts with a ribonucleoside 5'-triphosphate.

The protein belongs to the adenylate kinase family. AK3 subfamily. Monomer. Interacts with SLC25A5/ANT2. In terms of tissue distribution, expressed in kidney, liver, stomach, brain, spinal cord, heart, ovary, oviduct, colon, jejunum, ileum and testis (at protein level). In the brain, expressed in the pyramidal cells of the cerebrum and glial cells in the cerebellum (at protein level). In the heart, expressed by myocytes (at protein level). In the kidney, expressed in the proximal to distal tubule in the cortex and the outer and inner zones of the medulla (at protein level). In the stomach, expressed in stratified squamous epithelia in the forestomach and in the gastric pit and mucus producing cells of the glandular stomach (at protein level). Expressed in epithelial cells of the jejunum, ileum, and colon (at protein level). In the testis, expressed by spermatocytes (at protein level). In the ovaries, expressed by oocytes, follicular epithelial cells, and corpus luteum cells (at protein level). In the oviduct, expressed in the epithelia of the isthmus and the ciliated cells of the ampulla (at protein level). Expressed in the pyramidal cells in the hippocampus.

It localises to the mitochondrion matrix. The enzyme catalyses a ribonucleoside 5'-phosphate + ATP = a ribonucleoside 5'-diphosphate + ADP. It catalyses the reaction AMP + ATP = 2 ADP. It carries out the reaction GTP + AMP = GDP + ADP. The catalysed reaction is CMP + ATP = CDP + ADP. The enzyme catalyses GTP + CMP = CDP + GDP. It catalyses the reaction dAMP + ATP = dADP + ADP. It carries out the reaction dCMP + ATP = dCDP + ADP. The catalysed reaction is a 2'-deoxyribonucleoside 5'-diphosphate + ATP = a 2'-deoxyribonucleoside 5'-triphosphate + ADP. The enzyme catalyses a ribonucleoside 5'-diphosphate + ATP = a ribonucleoside 5'-triphosphate + ADP. It catalyses the reaction GDP + ATP = GTP + ADP. It carries out the reaction CDP + GTP = CTP + GDP. The catalysed reaction is CDP + ATP = CTP + ADP. The enzyme catalyses UDP + ATP = UTP + ADP. It catalyses the reaction GTP + UDP = UTP + GDP. It carries out the reaction dADP + GTP = dATP + GDP. The catalysed reaction is dCDP + GTP = dCTP + GDP. The enzyme catalyses dCDP + ATP = dCTP + ADP. It catalyses the reaction dGDP + ATP = dGTP + ADP. It carries out the reaction dTDP + GTP = dTTP + GDP. The catalysed reaction is dTDP + ATP = dTTP + ADP. Broad-specificity mitochondrial nucleoside phosphate kinase involved in cellular nucleotide homeostasis by catalyzing nucleoside-phosphate interconversions. Similar to other adenylate kinases, preferentially catalyzes the phosphorylation of the nucleoside monophosphate AMP with ATP as phosphate donor to produce ADP. Phosphorylates only AMP when using GTP as phosphate donor. In vitro, can also catalyze the phosphorylation of CMP, dAMP and dCMP and use GTP as an alternate phosphate donor. Moreover, exhibits a diphosphate kinase activity, producing ATP, CTP, GTP, UTP, TTP, dATP, dCTP and dGTP from the corresponding diphosphate substrates with either ATP or GTP as phosphate donors. Plays a role in controlling cellular ATP levels by regulating phosphorylation and activation of the energy sensor protein kinase AMPK. Plays a protective role in the cellular response to oxidative stress. This Mus musculus (Mouse) protein is Adenylate kinase 4, mitochondrial.